The sequence spans 102 residues: Small ribosomal subunit protein uS10 (102 aa).

It belongs to the universal ribosomal protein uS10 family. In terms of assembly, part of the 30S ribosomal subunit.

Functionally, involved in the binding of tRNA to the ribosomes. The sequence is that of Small ribosomal subunit protein uS10 from Agrobacterium fabrum (strain C58 / ATCC 33970) (Agrobacterium tumefaciens (strain C58)).